The primary structure comprises 471 residues: V-type ATP synthase beta chain (471 aa).

It belongs to the ATPase alpha/beta chains family.

Functionally, produces ATP from ADP in the presence of a proton gradient across the membrane. The V-type beta chain is a regulatory subunit. The polypeptide is V-type ATP synthase beta chain (Streptococcus pyogenes serotype M12 (strain MGAS2096)).